A 146-amino-acid polypeptide reads, in one-letter code: Oxygen-independent coproporphyrinogen III oxidase (146 aa).

S-adenosyl-L-methionine is bound at residue Y54. Residues C60 and C64 each contribute to the [4Fe-4S] cluster site. F66 is an S-adenosyl-L-methionine binding site. C67 is a [4Fe-4S] cluster binding site. Residues 111–112 and E143 each bind S-adenosyl-L-methionine; that span reads GT.

The protein belongs to the anaerobic coproporphyrinogen-III oxidase family. Monomer. [4Fe-4S] cluster serves as cofactor.

It localises to the cytoplasm. It catalyses the reaction coproporphyrinogen III + 2 S-adenosyl-L-methionine = protoporphyrinogen IX + 2 5'-deoxyadenosine + 2 L-methionine + 2 CO2. The protein operates within porphyrin-containing compound metabolism; protoporphyrin-IX biosynthesis; protoporphyrinogen-IX from coproporphyrinogen-III (AdoMet route): step 1/1. Its function is as follows. Involved in the heme biosynthesis. Catalyzes the anaerobic oxidative decarboxylation of propionate groups of rings A and B of coproporphyrinogen III to yield the vinyl groups in protoporphyrinogen IX. This Mannheimia haemolytica (Pasteurella haemolytica) protein is Oxygen-independent coproporphyrinogen III oxidase (hemN).